A 593-amino-acid chain; its full sequence is MATEGKNPINMNSMSSSLARTGQWVFSQDIPTDVVVEVGEANFSLHKFMLVAKSNYIRKLIMESKDSDVTRINLSDIPGGPEIFEKAAKFCYGVNFEITVQNVAALHCAAEFLQMTDKYCDNNLAGRTQDFLSQVALSSLSGAIVVLKSCEILLPISRDLGIVRRCVDVVGAKACNEAMFPCRTPPNWWTEELCILDVDFFSDVVSSMKQRGVKPSSLASAIITYTEKSLRDLVRDHSGRGVKYSDPGDNESDERSQQRDLVQSIVSLLPSDKGLFPVNFLCSLLRCAVFLDTSLTCKNELEKRISVVLEHVSVDDLLIPSFTYDGERLLDLDSVRRIISAFVEKEKNVGVFNGGDFNRGVCSVSLQRVAKTVDSYLAEIATYGDLTISKFNAIANLVPKSARKSDDDLYRAIDIFLKAHPNLDEIEREKVCSSMDPLKLSYDARLHASQNKRLPVNIVLHALYYDQLKLRSGVAEQEERAVVVLPEALKTRSQLQADTTLAKENEALRSELMKMKMYVSDMQKNKNGAGASSSNSSSLVSSKKSKHTFFSSVSKKLGKLNPFKNGSKDTSHIDEDLGGVDITKPRRRRFSIS.

Residues 32–100 (TDVVVEVGEA…CYGVNFEITV (69 aa)) form the BTB domain. The 283-residue stretch at 187–469 (NWWTEELCIL…LHALYYDQLK (283 aa)) folds into the NPH3 domain. At Y410 the chain carries Phosphotyrosine.

It belongs to the NPH3 family. In terms of assembly, interacts with RPT3 and PHOT1. In terms of tissue distribution, expressed in hypocotyls, guard cells and mesophyll cells.

The protein operates within protein modification; protein ubiquitination. In terms of biological role, may act as a substrate-specific adapter of an E3 ubiquitin-protein ligase complex (CUL3-RBX1-BTB) which mediates the ubiquitination and subsequent proteasomal degradation of target proteins. Signal transducer of the phototropic response and photo-induced movements. Necessary for root phototropism. Involved in hypocotyl phototropism under high rate but not under low rate light. Regulates stomata opening. Seems to be not involved in chloroplast accumulation and translocation. This chain is Root phototropism protein 2 (RPT2), found in Arabidopsis thaliana (Mouse-ear cress).